The primary structure comprises 181 residues: Peptide deformylase (181 aa).

The Fe cation site is built by C99 and H141. The active site involves E142. Residue H145 coordinates Fe cation.

The protein belongs to the polypeptide deformylase family. Fe(2+) is required as a cofactor.

The enzyme catalyses N-terminal N-formyl-L-methionyl-[peptide] + H2O = N-terminal L-methionyl-[peptide] + formate. Removes the formyl group from the N-terminal Met of newly synthesized proteins. Requires at least a dipeptide for an efficient rate of reaction. N-terminal L-methionine is a prerequisite for activity but the enzyme has broad specificity at other positions. This is Peptide deformylase from Chlamydia trachomatis serovar A (strain ATCC VR-571B / DSM 19440 / HAR-13).